The chain runs to 266 residues: Small ribosomal subunit protein uS3 (266 aa).

Residues 39-107 (VREYLKKKLK…PVHVNIEEIR (69 aa)) form the KH type-2 domain. The disordered stretch occupies residues 218-266 (EVAEDKRPRRNARPGDRRPRRDGEGGAPGARRGAPRRGAGKPEDGKTGE). Composition is skewed to basic and acidic residues over residues 230–241 (RPGDRRPRRDGE) and 257–266 (GKPEDGKTGE).

It belongs to the universal ribosomal protein uS3 family. Part of the 30S ribosomal subunit. Forms a tight complex with proteins S10 and S14.

In terms of biological role, binds the lower part of the 30S subunit head. Binds mRNA in the 70S ribosome, positioning it for translation. This is Small ribosomal subunit protein uS3 from Burkholderia multivorans (strain ATCC 17616 / 249).